Consider the following 138-residue polypeptide: Acidic phospholipase A2 Drk-a1 (138 aa).

A signal peptide spans 1 to 16; sequence MRTLWIVAVCLIGVEG. 7 disulfide bridges follow: Cys42-Cys131, Cys44-Cys60, Cys59-Cys111, Cys65-Cys138, Cys66-Cys104, Cys73-Cys97, and Cys91-Cys102. 3 residues coordinate Ca(2+): Tyr43, Gly45, and Gly47. His63 is a catalytic residue. Asp64 is a binding site for Ca(2+). Asp105 is an active-site residue.

It belongs to the phospholipase A2 family. Group II subfamily. D49 sub-subfamily. It depends on Ca(2+) as a cofactor. In terms of tissue distribution, expressed by the venom gland.

The protein localises to the secreted. It catalyses the reaction a 1,2-diacyl-sn-glycero-3-phosphocholine + H2O = a 1-acyl-sn-glycero-3-phosphocholine + a fatty acid + H(+). Its function is as follows. Snake venom phospholipase A2 (PLA2) that exhibits high hydrolytic activities and shows strong preference for the anionic micelles (dPPC with deoxycholate) to the zwitterionic micelles (dPPC with Triton X-100). PLA2 catalyzes the calcium-dependent hydrolysis of the 2-acyl groups in 3-sn-phosphoglycerides. The polypeptide is Acidic phospholipase A2 Drk-a1 (Daboia russelii (Russel's viper)).